The sequence spans 75 residues: RNA-binding protein KhpA (75 aa).

The region spanning 29 to 75 (KVVYHLTVHPDDVGKVIGKNGRIAKAIRTVVYASKTDGNKRIYLDIM) is the KH domain.

It belongs to the KhpA RNA-binding protein family. As to quaternary structure, forms a complex with KhpB.

The protein resides in the cytoplasm. In terms of biological role, a probable RNA chaperone. Forms a complex with KhpB which binds to cellular RNA and controls its expression. Plays a role in peptidoglycan (PG) homeostasis and cell length regulation. The chain is RNA-binding protein KhpA from Oceanobacillus iheyensis (strain DSM 14371 / CIP 107618 / JCM 11309 / KCTC 3954 / HTE831).